The primary structure comprises 181 residues: MGNVFEKLFKSLFGKKEMRILMVGLDAAGKTTILYKLKLGEIVTTIPTIGFNVETVEYKNISFTVWDVGGQDKIRPLWRHYFQNTQGLIFVVDSNDRERVNEAREELTRMLAEDELRDAVLLVFVNKQDLPNAMNAAEITDKLGLHSLRQRNWYIQATCATSGDGLYEGLDWLSNQLKNQK.

Residue glycine 2 is the site of N-myristoyl glycine attachment. GTP contacts are provided by residues 24-31 (GLDAAGKT), 67-71 (DVGGQ), and 126-129 (NKQD).

It belongs to the small GTPase superfamily. Arf family.

It localises to the golgi apparatus. Its function is as follows. GTP-binding protein that functions as an allosteric activator of the cholera toxin catalytic subunit, an ADP-ribosyltransferase. Involved in protein trafficking; may modulate vesicle budding and uncoating within the Golgi apparatus. The polypeptide is ADP-ribosylation factor 2 (ARF2) (Bos taurus (Bovine)).